Reading from the N-terminus, the 248-residue chain is 2,3-bisphosphoglycerate-dependent phosphoglycerate mutase (248 aa).

Residues 8-15 (RHGESTWN), 21-22 (TG), Arg60, 87-90 (ERHY), Lys98, 114-115 (RR), and 183-184 (GN) each bind substrate. His9 serves as the catalytic Tele-phosphohistidine intermediate. Residue Glu87 is the Proton donor/acceptor of the active site.

Belongs to the phosphoglycerate mutase family. BPG-dependent PGAM subfamily. As to quaternary structure, homodimer.

It catalyses the reaction (2R)-2-phosphoglycerate = (2R)-3-phosphoglycerate. Its pathway is carbohydrate degradation; glycolysis; pyruvate from D-glyceraldehyde 3-phosphate: step 3/5. Catalyzes the interconversion of 2-phosphoglycerate and 3-phosphoglycerate. The polypeptide is 2,3-bisphosphoglycerate-dependent phosphoglycerate mutase (Paraburkholderia phytofirmans (strain DSM 17436 / LMG 22146 / PsJN) (Burkholderia phytofirmans)).